The chain runs to 208 residues: Cysteine-rich protein 2 (208 aa).

Positions 5 to 57 (CPKCDKTVYFAEKVSSLGKDWHKFCLKCERCSKTLTPGGHAEHDGKPFCHKPC) constitute an LIM zinc-binding 1 domain. Lysine 23 carries the N6-acetyllysine modification. Residues 98-119 (AEERKASGPPKGPSRASSVTTF) form a disordered region. Serine 104 bears the Phosphoserine mark. The region spanning 126 to 178 (CPRCSKKVYFAEKVTSLGKDWHRPCLRCERCGKTLTPGGHAEHDGQPYCHKPC) is the LIM zinc-binding 2 domain. An N6-acetyllysine mark is found at lysine 138 and lysine 144.

As to quaternary structure, interacts with TGFB1I1. In terms of tissue distribution, widespread tissue expression; highest levels in the heart.

The chain is Cysteine-rich protein 2 (CRIP2) from Homo sapiens (Human).